A 598-amino-acid polypeptide reads, in one-letter code: UvrABC system protein C (598 aa).

A GIY-YIG domain is found at 13-91; that stretch reads TLPGVYRMVD…IKGLKPRFNI (79 aa). In terms of domain architecture, UVR spans 200-235; that stretch reads TALTEEITAQMNAAAENLDFETAAYLRDRLRMLATV.

The protein belongs to the UvrC family. In terms of assembly, interacts with UvrB in an incision complex.

Its subcellular location is the cytoplasm. The UvrABC repair system catalyzes the recognition and processing of DNA lesions. UvrC both incises the 5' and 3' sides of the lesion. The N-terminal half is responsible for the 3' incision and the C-terminal half is responsible for the 5' incision. This is UvrABC system protein C from Thiobacillus denitrificans (strain ATCC 25259 / T1).